A 643-amino-acid chain; its full sequence is Transmembrane protein 62 (643 aa).

Residues 9-29 (VVAGLAAAAVAALLLEHYGLA) form a helical membrane-spanning segment. An N-linked (GlcNAc...) asparagine glycan is attached at Asn-180. 4 consecutive transmembrane segments (helical) span residues 431 to 451 (IVAR…LITF), 484 to 504 (YSVL…GEII), 532 to 552 (GIIQ…WSLL), and 572 to 592 (IIPV…SCYF).

It localises to the membrane. This chain is Transmembrane protein 62 (Tmem62), found in Mus musculus (Mouse).